A 200-amino-acid polypeptide reads, in one-letter code: MKVLLLVLGAALCQNADANPTWANEAKLGSYQDAWKSLQQDQNKRYYLAQATQTTDGVWGEEFTCVSVTAEKIGKKKLNATILYKNKHLTDLKESHETITVWKAYDYTTENGIKYETQGTRTQTFEDVFVFSDYKNCDVIFVPKERGSDEGDYELWVSEDKIDKIPDCCKFTMAYFAQQQEKTVRNVYTDSSCKPAPAQN.

Residues 1–18 (MKVLLLVLGAALCQNADA) form the signal peptide. Residues Ser-37, Asp-41, Asp-56, and Trp-59 each coordinate histamine. Cystine bridges form between Cys-65-Cys-193 and Cys-137-Cys-169. N-linked (GlcNAc...) asparagine glycosylation is present at Asn-79. Histamine-binding residues include Glu-97, Tyr-115, Phe-125, Asp-138, Glu-154, and Trp-156.

It belongs to the calycin superfamily. Histamine-binding salivary protein family. Homodimer; disulcde-linked. Post-translationally, N-glycosylated. In terms of tissue distribution, expressed in salivary glands.

The protein resides in the secreted. In terms of biological role, salivary tick protein that acts by scavenging histamine at the wound site, outcompeting histamine receptors for histamine, thereby overcoming host inflammatory responses. Binds histamine with a high-affinity (Kd=1.2 nM). Contains two binding histamine sites (H and L), that appear to bind histamine with differing affinities. This is Male-specific histamine-binding salivary protein from Rhipicephalus appendiculatus (Brown ear tick).